We begin with the raw amino-acid sequence, 1462 residues long: DNA polymerase III PolC-type (1462 aa).

Residues 424-580 (YVVFDVETTG…YDAEATGRLL (157 aa)) enclose the Exonuclease domain.

The protein belongs to the DNA polymerase type-C family. PolC subfamily.

The protein resides in the cytoplasm. It carries out the reaction DNA(n) + a 2'-deoxyribonucleoside 5'-triphosphate = DNA(n+1) + diphosphate. Its function is as follows. Required for replicative DNA synthesis. This DNA polymerase also exhibits 3' to 5' exonuclease activity. This is DNA polymerase III PolC-type from Streptococcus sanguinis (strain SK36).